The primary structure comprises 407 residues: Arginine deiminase (407 aa).

The active-site Amidino-cysteine intermediate is Cys397.

This sequence belongs to the arginine deiminase family.

It is found in the cytoplasm. It carries out the reaction L-arginine + H2O = L-citrulline + NH4(+). Its pathway is amino-acid degradation; L-arginine degradation via ADI pathway; carbamoyl phosphate from L-arginine: step 1/2. This Salmonella choleraesuis (strain SC-B67) protein is Arginine deiminase.